The following is a 239-amino-acid chain: Probable transcriptional regulatory protein CD630_07950 (239 aa).

Belongs to the TACO1 family.

It localises to the cytoplasm. The polypeptide is Probable transcriptional regulatory protein CD630_07950 (Clostridioides difficile (strain 630) (Peptoclostridium difficile)).